An 888-amino-acid polypeptide reads, in one-letter code: C2H2 zinc finger transcription factor sltA (888 aa).

Disordered stretches follow at residues 1-78, 132-176, and 388-407; these read MSTS…QRSP, IDSQ…SSEN, and RSSM…ASAP. Composition is skewed to polar residues over residues 23–32, 167–176, and 388–397; these read PSLSASTSIE, GLGTSLSSEN, and RSSMPSNREP. C2H2-type zinc fingers lie at residues 500 to 522 and 561 to 586; these read QKCK…EKTH and YKCK…EKAH. The interval 589–663 is disordered; sequence DYVRSKHNGR…PTQTGSGDFP (75 aa). Residues 602–632 show a composition bias toward polar residues; sequence KASNGATPQTPSIATPSSKAQGITTPLTGSE.

It localises to the nucleus. Functionally, transcription factor that contributes to azole resistance by coregulating the expression of the drug target erg11A and the drug efflux pump mdr1. Binds to the 5'-AGGCA-3' motif in the promoters of ergosterol biosynthesis and drug pump genes to regulate their expression. Is able to interact with the promoters of sltA, sltB, erg11A, erg13A, erg24A, mdr1, abcE and mfsC. Involved in antifungal drug resistance to azoles, terbinafine, and simvastatin but not amphotericin B or caspofungin. This is C2H2 zinc finger transcription factor sltA from Aspergillus fumigatus (strain CBS 144.89 / FGSC A1163 / CEA10) (Neosartorya fumigata).